A 317-amino-acid polypeptide reads, in one-letter code: Transcription factor EC (317 aa).

Positions 1-44 (MTLDHQILNQSFKRSHPPTPSSELLVQHGHPSPESDTGLTGNPL) are disordered. Positions 1-90 (MTLDHQILNQ…GLTSASCPSS (90 aa)) are necessary for transcriptional transactivation. The segment covering 34 to 43 (ESDTGLTGNP) has biased composition (polar residues). A bHLH domain is found at 110-163 (QKKDNHNLIERRRRYNINYRIKELGTLIPKSNDPDMRWNKGTILKASVEYIKWL). Residues 241–317 (TSPELCDQAM…SFSSEDGDEL (77 aa)) are necessary for transcriptional transactivation. The interval 297–317 (PAVSKESSRRSSFSSEDGDEL) is disordered.

Belongs to the MiT/TFE family. Homodimer. Forms heterodimers with MITF and TFE3. Interacts with MITF.

The protein localises to the nucleus. Transcriptional regulator that acts as a repressor or an activator. Acts as a transcriptional repressor on minimal promoter containing element F (that includes an E-box sequence). Binds to element F in an E-box sequence-specific manner. Acts as a transcriptional transactivator on the proximal promoter region of the tartrate-resistant acid phosphatase (TRAP) E-box containing promoter. Collaborates with MITF in target gene activation. Acts as a transcriptional repressor on minimal promoter containing mu E3 enhancer sequence. Binds to mu E3 DNA sequence of the immunoglobulin heavy-chain gene enhancer. Binds DNA in a homo- or heterodimeric form. The protein is Transcription factor EC (TFEC) of Bos taurus (Bovine).